The chain runs to 103 residues: Large ribosomal subunit protein bL21 (103 aa).

The protein belongs to the bacterial ribosomal protein bL21 family. As to quaternary structure, part of the 50S ribosomal subunit. Contacts protein L20.

Its function is as follows. This protein binds to 23S rRNA in the presence of protein L20. The chain is Large ribosomal subunit protein bL21 from Legionella pneumophila (strain Paris).